Consider the following 419-residue polypeptide: Serine--tRNA ligase (419 aa).

226–228 (TSE) is an L-serine binding site. Residues 257–259 (RRE) and Val-273 contribute to the ATP site. Position 280 (Glu-280) interacts with L-serine. Position 344-347 (344-347 (ELTS)) interacts with ATP. Residue Thr-379 participates in L-serine binding.

It belongs to the class-II aminoacyl-tRNA synthetase family. Type-1 seryl-tRNA synthetase subfamily. In terms of assembly, homodimer. The tRNA molecule binds across the dimer.

It localises to the cytoplasm. It carries out the reaction tRNA(Ser) + L-serine + ATP = L-seryl-tRNA(Ser) + AMP + diphosphate + H(+). The enzyme catalyses tRNA(Sec) + L-serine + ATP = L-seryl-tRNA(Sec) + AMP + diphosphate + H(+). Its pathway is aminoacyl-tRNA biosynthesis; selenocysteinyl-tRNA(Sec) biosynthesis; L-seryl-tRNA(Sec) from L-serine and tRNA(Sec): step 1/1. Catalyzes the attachment of serine to tRNA(Ser). Is also able to aminoacylate tRNA(Sec) with serine, to form the misacylated tRNA L-seryl-tRNA(Sec), which will be further converted into selenocysteinyl-tRNA(Sec). This chain is Serine--tRNA ligase, found in Corynebacterium efficiens (strain DSM 44549 / YS-314 / AJ 12310 / JCM 11189 / NBRC 100395).